Reading from the N-terminus, the 207-residue chain is Outer-membrane lipoprotein LolB (207 aa).

The signal sequence occupies residues 1 to 23 (MINLRRFTKFTLAGLTALSLLGG). The N-palmitoyl cysteine moiety is linked to residue C24. C24 is lipidated: S-diacylglycerol cysteine.

The protein belongs to the LolB family. As to quaternary structure, monomer.

The protein resides in the cell outer membrane. Functionally, plays a critical role in the incorporation of lipoproteins in the outer membrane after they are released by the LolA protein. The protein is Outer-membrane lipoprotein LolB of Shewanella amazonensis (strain ATCC BAA-1098 / SB2B).